We begin with the raw amino-acid sequence, 236 residues long: Sugar fermentation stimulation protein homolog (236 aa).

This sequence belongs to the SfsA family.

This Proteus mirabilis (strain HI4320) protein is Sugar fermentation stimulation protein homolog.